The primary structure comprises 147 residues: Large ribosomal subunit protein bL9 (147 aa).

The protein belongs to the bacterial ribosomal protein bL9 family.

Binds to the 23S rRNA. In Myxococcus xanthus (strain DK1622), this protein is Large ribosomal subunit protein bL9.